A 261-amino-acid polypeptide reads, in one-letter code: Cytochrome c oxidase subunit 3 (261 aa).

The Mitochondrial matrix segment spans residues 1-15; it reads MTHQLHQYHLVDPSP. A helical transmembrane segment spans residues 16–34; the sequence is WPLTGAMGSLLLASGLAVW. The Mitochondrial intermembrane portion of the chain corresponds to 35-40; that stretch reads FHTNNT. Residues 41–66 form a helical membrane-spanning segment; sequence MLLKFGLLTLLLTMFQWWRDIIREST. Over 67–72 the chain is Mitochondrial matrix; it reads YQGHHT. A helical transmembrane segment spans residues 73–105; sequence SGVQKNMRYGMILFITSEVFFFLGFFWALYHVS. Topologically, residues 106–128 are mitochondrial intermembrane; that stretch reads LVPTPELGAEWPPIGITPLNPME. A helical transmembrane segment spans residues 129 to 152; the sequence is VPLLNTAVLLSSGATITWSHHTMM. Topologically, residues 153 to 155 are mitochondrial matrix; it reads KGN. A helical transmembrane segment spans residues 156–183; the sequence is KKEATHALMLTIILGAYFTALQLSEYME. The Mitochondrial intermembrane portion of the chain corresponds to 184–190; sequence TPFTIAD. Residues 191 to 223 traverse the membrane as a helical segment; that stretch reads SVYGSLFFVATGFHGLHVMIGTSFLMVCALRLA. The Mitochondrial matrix portion of the chain corresponds to 224–232; the sequence is KHHFTITHH. A helical transmembrane segment spans residues 233–256; that stretch reads FGYEAAIWYWHFVDIVWLFLYISV. At 257–261 the chain is on the mitochondrial intermembrane side; it reads YWWGS.

This sequence belongs to the cytochrome c oxidase subunit 3 family. As to quaternary structure, component of the cytochrome c oxidase (complex IV, CIV), a multisubunit enzyme composed of 14 subunits. The complex is composed of a catalytic core of 3 subunits MT-CO1, MT-CO2 and MT-CO3, encoded in the mitochondrial DNA, and 11 supernumerary subunits COX4I, COX5A, COX5B, COX6A, COX6B, COX6C, COX7A, COX7B, COX7C, COX8 and NDUFA4, which are encoded in the nuclear genome. The complex exists as a monomer or a dimer and forms supercomplexes (SCs) in the inner mitochondrial membrane with NADH-ubiquinone oxidoreductase (complex I, CI) and ubiquinol-cytochrome c oxidoreductase (cytochrome b-c1 complex, complex III, CIII), resulting in different assemblies (supercomplex SCI(1)III(2)IV(1) and megacomplex MCI(2)III(2)IV(2)).

The protein localises to the mitochondrion inner membrane. The enzyme catalyses 4 Fe(II)-[cytochrome c] + O2 + 8 H(+)(in) = 4 Fe(III)-[cytochrome c] + 2 H2O + 4 H(+)(out). Functionally, component of the cytochrome c oxidase, the last enzyme in the mitochondrial electron transport chain which drives oxidative phosphorylation. The respiratory chain contains 3 multisubunit complexes succinate dehydrogenase (complex II, CII), ubiquinol-cytochrome c oxidoreductase (cytochrome b-c1 complex, complex III, CIII) and cytochrome c oxidase (complex IV, CIV), that cooperate to transfer electrons derived from NADH and succinate to molecular oxygen, creating an electrochemical gradient over the inner membrane that drives transmembrane transport and the ATP synthase. Cytochrome c oxidase is the component of the respiratory chain that catalyzes the reduction of oxygen to water. Electrons originating from reduced cytochrome c in the intermembrane space (IMS) are transferred via the dinuclear copper A center (CU(A)) of subunit 2 and heme A of subunit 1 to the active site in subunit 1, a binuclear center (BNC) formed by heme A3 and copper B (CU(B)). The BNC reduces molecular oxygen to 2 water molecules using 4 electrons from cytochrome c in the IMS and 4 protons from the mitochondrial matrix. The sequence is that of Cytochrome c oxidase subunit 3 (MT-CO3) from Lycodon semicarinatus (Ryukyu odd-tooth snake).